Reading from the N-terminus, the 148-residue chain is Large ribosomal subunit protein bL9 (148 aa).

This sequence belongs to the bacterial ribosomal protein bL9 family.

In terms of biological role, binds to the 23S rRNA. This chain is Large ribosomal subunit protein bL9, found in Chromohalobacter salexigens (strain ATCC BAA-138 / DSM 3043 / CIP 106854 / NCIMB 13768 / 1H11).